Consider the following 207-residue polypeptide: Glutathione S-transferase P (207 aa).

The GST N-terminal domain occupies proline 1–glycine 78. Position 3 is a phosphotyrosine; by EGFR (tyrosine 3). Glutathione is bound by residues tyrosine 7, arginine 13, tryptophan 38, lysine 42, and glutamine 49–leucine 50. Threonine 59 carries the phosphothreonine modification. Residue glutamine 62–serine 63 participates in glutathione binding. The 122-residue stretch at aspartate 80–isoleucine 201 folds into the GST C-terminal domain. N6-succinyllysine occurs at positions 100 and 113. At lysine 125 the chain carries N6-acetyllysine.

This sequence belongs to the GST superfamily. Pi family. As to quaternary structure, homodimer. Interacts with CDK5.

The protein resides in the cytoplasm. It is found in the mitochondrion. It localises to the nucleus. The catalysed reaction is RX + glutathione = an S-substituted glutathione + a halide anion + H(+). It catalyses the reaction prostaglandin J2 + glutathione = prostaglandin J2-S-(R)-glutathione. It carries out the reaction prostaglandin J2 + glutathione = prostaglandin J2-S-(S)-glutathione. The enzyme catalyses prostaglandin A2 + glutathione = prostaglandin A2-S-(S)-glutathione. The catalysed reaction is 11(S)-hydroxy-14(S),15(S)-epoxy-(5Z,8Z,12E)-eicosatrienoate + glutathione = (11S,15S)-dihydroxy-14(R)-S-glutathionyl-(5Z,8Z,12E)-eicosatrienoate. In terms of biological role, conjugation of reduced glutathione to a wide number of exogenous and endogenous hydrophobic electrophiles. Involved in the formation of glutathione conjugates of both prostaglandin A2 (PGA2) and prostaglandin J2 (PGJ2). Participates in the formation of novel hepoxilin regioisomers. Negatively regulates CDK5 activity via p25/p35 translocation to prevent neurodegeneration. This Sus scrofa (Pig) protein is Glutathione S-transferase P (GSTP1).